We begin with the raw amino-acid sequence, 204 residues long: GTP cyclohydrolase-2 (204 aa).

49–53 (RIHSE) is a binding site for GTP. Zn(2+) contacts are provided by C54, C65, and C67. GTP-binding positions include Q70, 92-94 (EGR), and T114. D126 functions as the Proton acceptor in the catalytic mechanism. R128 functions as the Nucleophile in the catalytic mechanism. GTP contacts are provided by T149 and K154.

The protein belongs to the GTP cyclohydrolase II family. Zn(2+) is required as a cofactor.

It carries out the reaction GTP + 4 H2O = 2,5-diamino-6-hydroxy-4-(5-phosphoribosylamino)-pyrimidine + formate + 2 phosphate + 3 H(+). It functions in the pathway cofactor biosynthesis; riboflavin biosynthesis; 5-amino-6-(D-ribitylamino)uracil from GTP: step 1/4. Functionally, catalyzes the conversion of GTP to 2,5-diamino-6-ribosylamino-4(3H)-pyrimidinone 5'-phosphate (DARP), formate and pyrophosphate. The polypeptide is GTP cyclohydrolase-2 (Shewanella baltica (strain OS155 / ATCC BAA-1091)).